The following is a 470-amino-acid chain: Trigger factor (470 aa).

The region spanning Gly164 to Pro243 is the PPIase FKBP-type domain. 2 stretches are compositionally biased toward acidic residues: residues Glu424 to Glu438 and Ala445 to Ala470. The segment at Glu424–Ala470 is disordered.

It belongs to the FKBP-type PPIase family. Tig subfamily.

It is found in the cytoplasm. It catalyses the reaction [protein]-peptidylproline (omega=180) = [protein]-peptidylproline (omega=0). Its function is as follows. Involved in protein export. Acts as a chaperone by maintaining the newly synthesized protein in an open conformation. Functions as a peptidyl-prolyl cis-trans isomerase. The chain is Trigger factor from Beutenbergia cavernae (strain ATCC BAA-8 / DSM 12333 / CCUG 43141 / JCM 11478 / NBRC 16432 / NCIMB 13614 / HKI 0122).